The following is a 364-amino-acid chain: Bifunctional protein Rv2228c (364 aa).

In terms of domain architecture, RNase H type-1 spans 1 to 139; that stretch reads MKVVIEADGG…MDAAAQSAAA (139 aa). Residues aspartate 8, glutamate 49, aspartate 73, and aspartate 123 each coordinate Mg(2+). Histidine 172 serves as the catalytic Tele-phosphohistidine intermediate. Glutamate 246 functions as the Proton donor/acceptor; for phosphatase activity in the catalytic mechanism.

In the N-terminal section; belongs to the RNase H family. The protein in the C-terminal section; belongs to the histidine phosphatase superfamily. The N-terminal domain alone is monomeric in solution but associates in the crystal to form a dimer. The cofactor is Mg(2+).

The enzyme catalyses Endonucleolytic cleavage to 5'-phosphomonoester.. The catalysed reaction is adenosylcob(III)alamin 5'-phosphate + H2O = adenosylcob(III)alamin + phosphate. It carries out the reaction alpha-ribazole 5'-phosphate + H2O = alpha-ribazole + phosphate. It participates in nucleoside biosynthesis; alpha-ribazole biosynthesis; alpha-ribazole from 5,6-dimethylbenzimidazole: step 2/2. In terms of biological role, endonuclease that displays both RNase H activity with a hybrid RNA/DNA substrate as well as double-stranded RNase activity. As the only authenticated RNase HI in M.tuberculosis, probably plays an important role in the physiology of this organism, being likely involved in bacterial replication. Catalyzes the hydrolysis of the phospho group from alpha-ribazole 5'-phosphate to form alpha-ribazole. May also catalyze the conversion of adenosylcobalamin 5'-phosphate to adenosylcobalamin (vitamin B12). Has a possible role in B12 recycling, but the primary role of the C-terminal domain of this phosphatase enzyme could be phosphate generation to help bacterial survival within the macrophage, which is a phosphate-deprived environment. The chain is Bifunctional protein Rv2228c from Mycobacterium tuberculosis (strain ATCC 25618 / H37Rv).